The chain runs to 648 residues: Threonine--tRNA ligase (648 aa).

The 61-residue stretch at 1–61 folds into the TGS domain; sequence MIKITLPDGS…TTDGNLILYT (61 aa). A catalytic region spans residues 240 to 539; sequence DHRKLGKELE…LLEHTAGNFP (300 aa). 3 residues coordinate Zn(2+): Cys335, His386, and His516.

Belongs to the class-II aminoacyl-tRNA synthetase family. In terms of assembly, homodimer. The cofactor is Zn(2+).

The protein resides in the cytoplasm. The enzyme catalyses tRNA(Thr) + L-threonine + ATP = L-threonyl-tRNA(Thr) + AMP + diphosphate + H(+). Functionally, catalyzes the attachment of threonine to tRNA(Thr) in a two-step reaction: L-threonine is first activated by ATP to form Thr-AMP and then transferred to the acceptor end of tRNA(Thr). Also edits incorrectly charged L-seryl-tRNA(Thr). The polypeptide is Threonine--tRNA ligase (Flavobacterium johnsoniae (strain ATCC 17061 / DSM 2064 / JCM 8514 / BCRC 14874 / CCUG 350202 / NBRC 14942 / NCIMB 11054 / UW101) (Cytophaga johnsonae)).